We begin with the raw amino-acid sequence, 37 residues long: Large ribosomal subunit protein bL36c (37 aa).

This sequence belongs to the bacterial ribosomal protein bL36 family.

It is found in the plastid. The protein resides in the chloroplast. The sequence is that of Large ribosomal subunit protein bL36c (rpl36) from Porphyra purpurea (Red seaweed).